The following is a 172-amino-acid chain: Translationally-controlled tumor protein homolog (172 aa).

The TCTP domain occupies 1–172 (MIIYKDTVTE…FKDGLISEKC (172 aa)).

This sequence belongs to the TCTP family.

It is found in the cytoplasm. Functionally, involved in calcium binding and microtubule stabilization. In Xenopus tropicalis (Western clawed frog), this protein is Translationally-controlled tumor protein homolog (tpt1).